A 296-amino-acid chain; its full sequence is DNA primase small subunit PriS (296 aa).

Active-site residues include Asp82, Asp84, and Asp191.

It belongs to the eukaryotic-type primase small subunit family. Heterodimer of a small subunit (PriS) and a large subunit (PriL). Requires Mg(2+) as cofactor. The cofactor is Mn(2+).

Catalytic subunit of DNA primase, an RNA polymerase that catalyzes the synthesis of short RNA molecules used as primers for DNA polymerase during DNA replication. The small subunit contains the primase catalytic core and has DNA synthesis activity on its own. Binding to the large subunit stabilizes and modulates the activity, increasing the rate of DNA synthesis while decreasing the length of the DNA fragments, and conferring RNA synthesis capability. The DNA polymerase activity may enable DNA primase to also catalyze primer extension after primer synthesis. May also play a role in DNA repair. This Methanopyrus kandleri (strain AV19 / DSM 6324 / JCM 9639 / NBRC 100938) protein is DNA primase small subunit PriS.